The following is a 342-amino-acid chain: Methionine import ATP-binding protein MetN 3 (342 aa).

Residues 2 to 241 form the ABC transporter domain; the sequence is ISLKGISKTF…PKEQMTKEFV (240 aa). ATP is bound at residue 38–45; the sequence is GYSGAGKS.

This sequence belongs to the ABC transporter superfamily. Methionine importer (TC 3.A.1.24) family. In terms of assembly, the complex is composed of two ATP-binding proteins (MetN), two transmembrane proteins (MetI) and a solute-binding protein (MetQ).

It is found in the cell membrane. It catalyses the reaction L-methionine(out) + ATP + H2O = L-methionine(in) + ADP + phosphate + H(+). The enzyme catalyses D-methionine(out) + ATP + H2O = D-methionine(in) + ADP + phosphate + H(+). Part of the ABC transporter complex MetNIQ involved in methionine import. Responsible for energy coupling to the transport system. This is Methionine import ATP-binding protein MetN 3 from Shouchella clausii (strain KSM-K16) (Alkalihalobacillus clausii).